The sequence spans 387 residues: Killer cell lectin-like receptor subfamily G member 2 (387 aa).

The disordered stretch occupies residues 1 to 105 (MEPPQVPAEA…SGEPAPASWA (105 aa)). Basic and acidic residues predominate over residues 15 to 27 (ASEDSPRPERTGW). Ser-143 carries the phosphoserine modification. The tract at residues 155 to 174 (QWLPRAPSPGSTWSRGSPLA) is disordered. The chain crosses the membrane as a helical span at residues 241–261 (WALVVMAVLLAVCTVAVVALA). One can recognise a C-type lectin domain in the interval 278-383 (SQEQCYYLSE…CSSPRPWVCA (106 aa)). 2 disulfide bridges follow: Cys-299–Cys-382 and Cys-361–Cys-374.

Its subcellular location is the membrane. The chain is Killer cell lectin-like receptor subfamily G member 2 (Klrg2) from Mus musculus (Mouse).